The primary structure comprises 452 residues: Nebulette (452 aa).

The tract at residues 1–26 (MKVPVSGDVKEETEEENVEQEENQEA) is disordered. Residues 11 to 23 (EETEEENVEQEEN) are compositionally biased toward acidic residues. Nebulin repeat units lie at residues 29-63 (SLKP…KSKD), 64-98 (KCTF…ADLS), 101-135 (LYKD…AEKG), 138-172 (DYTH…GTHT), 173-199 (YTAE…EYKK), 206-240 (KEPS…NEMK), 263-278 (LASD…ENKG), 279-313 (LYHF…KNKG), 315-349 (SMLE…KEIK), 352-386 (SSLD…NEIK), 389-423 (GMEL…TEIK), and 426-452 (GMQV…VRMV).

Interacts (via nebulin repeats 1-5) with DESM (via rod region). Interacts (via SH3 domain) with XIRP2.

It is found in the cytoplasm. Binds to actin and plays an important role in the assembly of the Z-disk. May functionally link sarcomeric actin to the desmin intermediate filaments in the heart muscle sarcomeres. Isoform 2 might play a role in the assembly of focal adhesion. The protein is Nebulette (Nebl) of Mus musculus (Mouse).